The chain runs to 353 residues: Cyanuric acid amidohydrolase (353 aa).

Residues 1-90 (MSSTALYTVP…NIFVRDERQY (90 aa)) form an RU A region. Substrate contacts are provided by residues arginine 49 and 69 to 70 (SG). The tract at residues 96-231 (GLVTAVGRTR…CHILVVAESD (136 aa)) is RU B. The active site involves lysine 145. Substrate contacts are provided by residues arginine 177 and 214 to 215 (SS). Catalysis depends on serine 214, which acts as the Nucleophile. The RU C stretch occupies residues 237 to 353 (LRAAHTAMRD…TANATGEASR (117 aa)). Glutamate 275 is a Mg(2+) binding site. Substrate-binding positions include arginine 302 and 321–322 (SG). 5 residues coordinate Mg(2+): alanine 324, glutamine 327, glycine 328, proline 329, and glycine 332.

It belongs to the cyclic amide hydrolase (CyAH) family. As to quaternary structure, homotetramer.

It carries out the reaction cyanurate + H2O = 1-carboxybiuret + H(+). It participates in xenobiotic degradation; atrazine degradation; biuret from cyanurate: step 1/1. Inhibited by barbituric acid. Its function is as follows. Responsible for the hydrolysis of cyanuric acid, an intermediate formed during catabolism of s-triazine based compounds in herbicides such as atrazine and polymers such as melamine. Catalyzes the hydrolytic opening of the s-triazine ring of cyanuric acid (2,4,6-trihydroxy-s-triazine) to yield carbon dioxide and carboxybiuret, which spontaneously decarboxylates to biuret. Required for growth on melamine or cyanuric acid as sole nitrogen source. This is Cyanuric acid amidohydrolase from Rhodococcus sp.